Reading from the N-terminus, the 403-residue chain is Na(+)/H(+) antiporter NhaA (403 aa).

12 helical membrane passes run 25-45 (IAGL…NSPF), 70-90 (LILW…GLEI), 105-125 (IALP…IFLA), 136-156 (GWAV…AMLG), 165-185 (VFLT…IALA), 188-208 (EGLS…LIVL), 213-233 (VASL…VLES), 234-254 (GVHS…RVSG), 269-289 (VALL…LGGV), 302-322 (IILG…GLAV), 340-360 (GAAL…GLAF), and 369-389 (VNLA…VVLA).

Belongs to the NhaA Na(+)/H(+) (TC 2.A.33) antiporter family.

It localises to the cell inner membrane. It carries out the reaction Na(+)(in) + 2 H(+)(out) = Na(+)(out) + 2 H(+)(in). Its function is as follows. Na(+)/H(+) antiporter that extrudes sodium in exchange for external protons. The polypeptide is Na(+)/H(+) antiporter NhaA (Maricaulis maris (strain MCS10) (Caulobacter maris)).